The chain runs to 73 residues: Crustacean hyperglycemic hormone (73 aa).

Disulfide bonds link C7–C43, C23–C39, and C26–C52. The residue at position 73 (S73) is a Serine amide.

As to expression, produced by the medulla terminalis X-organ in the eyestalks and transported to the sinus gland where they are stored and released. Found also in the brain; in the neuroendocrine structures of the protocerebrum.

The protein resides in the secreted. Hormone found in the sinus gland of isopods and decapods which controls the blood sugar level. Has a secretagogue action over the amylase released from the midgut gland. May act as a stress hormone and may be involved in the control of molting and reproduction. This chain is Crustacean hyperglycemic hormone, found in Armadillidium vulgare (Pillbug).